The following is a 238-amino-acid chain: Phosphoglycolate phosphatase (238 aa).

D8 (nucleophile) is an active-site residue. Residues D8 and D10 each coordinate Mg(2+). K163 is a binding site for substrate. Mg(2+)-binding residues include D186 and D190.

This sequence belongs to the archaeal SPP-like hydrolase family. It depends on Mg(2+) as a cofactor.

It carries out the reaction 2-phosphoglycolate + H2O = glycolate + phosphate. Functionally, catalyzes the dephosphorylation of 2-phosphoglycolate. The protein is Phosphoglycolate phosphatase of Staphylothermus marinus (strain ATCC 43588 / DSM 3639 / JCM 9404 / F1).